We begin with the raw amino-acid sequence, 493 residues long: Bifunctional protein GlmU (493 aa).

The segment at Met-1–Arg-246 is pyrophosphorylase. UDP-N-acetyl-alpha-D-glucosamine is bound by residues Leu-21–Gly-24, Lys-35, Gln-88, Gly-93–Thr-94, Ser-117–Asp-119, Gly-156, Glu-171, Asn-186, and Asn-244. Asp-119 provides a ligand contact to Mg(2+). Asn-244 is a Mg(2+) binding site. The linker stretch occupies residues Val-247–Ala-267. An N-acetyltransferase region spans residues Gly-268–Ala-493. 2 residues coordinate UDP-N-acetyl-alpha-D-glucosamine: Arg-349 and Lys-367. His-379 serves as the catalytic Proton acceptor. UDP-N-acetyl-alpha-D-glucosamine is bound by residues Tyr-382 and Asn-393. Acetyl-CoA contacts are provided by residues Ala-396, Asn-402–Tyr-403, Ser-421, and Ala-439. The disordered stretch occupies residues Arg-470–Ala-493.

It in the N-terminal section; belongs to the N-acetylglucosamine-1-phosphate uridyltransferase family. The protein in the C-terminal section; belongs to the transferase hexapeptide repeat family. In terms of assembly, homotrimer. The cofactor is Mg(2+).

The protein resides in the cytoplasm. The catalysed reaction is alpha-D-glucosamine 1-phosphate + acetyl-CoA = N-acetyl-alpha-D-glucosamine 1-phosphate + CoA + H(+). The enzyme catalyses N-acetyl-alpha-D-glucosamine 1-phosphate + UTP + H(+) = UDP-N-acetyl-alpha-D-glucosamine + diphosphate. The protein operates within nucleotide-sugar biosynthesis; UDP-N-acetyl-alpha-D-glucosamine biosynthesis; N-acetyl-alpha-D-glucosamine 1-phosphate from alpha-D-glucosamine 6-phosphate (route II): step 2/2. It participates in nucleotide-sugar biosynthesis; UDP-N-acetyl-alpha-D-glucosamine biosynthesis; UDP-N-acetyl-alpha-D-glucosamine from N-acetyl-alpha-D-glucosamine 1-phosphate: step 1/1. It functions in the pathway bacterial outer membrane biogenesis; LPS lipid A biosynthesis. In terms of biological role, catalyzes the last two sequential reactions in the de novo biosynthetic pathway for UDP-N-acetylglucosamine (UDP-GlcNAc). The C-terminal domain catalyzes the transfer of acetyl group from acetyl coenzyme A to glucosamine-1-phosphate (GlcN-1-P) to produce N-acetylglucosamine-1-phosphate (GlcNAc-1-P), which is converted into UDP-GlcNAc by the transfer of uridine 5-monophosphate (from uridine 5-triphosphate), a reaction catalyzed by the N-terminal domain. This chain is Bifunctional protein GlmU, found in Clavibacter sepedonicus (Clavibacter michiganensis subsp. sepedonicus).